A 310-amino-acid polypeptide reads, in one-letter code: Methionyl-tRNA formyltransferase (310 aa).

Residue 109–112 (SLLP) coordinates (6S)-5,6,7,8-tetrahydrofolate.

This sequence belongs to the Fmt family.

The enzyme catalyses L-methionyl-tRNA(fMet) + (6R)-10-formyltetrahydrofolate = N-formyl-L-methionyl-tRNA(fMet) + (6S)-5,6,7,8-tetrahydrofolate + H(+). Attaches a formyl group to the free amino group of methionyl-tRNA(fMet). The formyl group appears to play a dual role in the initiator identity of N-formylmethionyl-tRNA by promoting its recognition by IF2 and preventing the misappropriation of this tRNA by the elongation apparatus. The polypeptide is Methionyl-tRNA formyltransferase (Staphylococcus epidermidis (strain ATCC 12228 / FDA PCI 1200)).